A 253-amino-acid chain; its full sequence is Ubiquinone biosynthesis O-methyltransferase (253 aa).

S-adenosyl-L-methionine-binding residues include R45, G76, D97, and M140.

This sequence belongs to the methyltransferase superfamily. UbiG/COQ3 family.

The catalysed reaction is a 3-demethylubiquinol + S-adenosyl-L-methionine = a ubiquinol + S-adenosyl-L-homocysteine + H(+). It catalyses the reaction a 3-(all-trans-polyprenyl)benzene-1,2-diol + S-adenosyl-L-methionine = a 2-methoxy-6-(all-trans-polyprenyl)phenol + S-adenosyl-L-homocysteine + H(+). The protein operates within cofactor biosynthesis; ubiquinone biosynthesis. O-methyltransferase that catalyzes the 2 O-methylation steps in the ubiquinone biosynthetic pathway. The sequence is that of Ubiquinone biosynthesis O-methyltransferase from Parvibaculum lavamentivorans (strain DS-1 / DSM 13023 / NCIMB 13966).